The chain runs to 355 residues: Probable dual-specificity RNA methyltransferase RlmN (355 aa).

The disordered stretch occupies residues 1 to 20 (MSATPVTQLTPSSQPQQPCS). E107 functions as the Proton acceptor in the catalytic mechanism. The Radical SAM core domain maps to 113-341 (TDKRLTVCVS…VSVRYSRGLE (229 aa)). C120 and C346 are disulfide-bonded. 3 residues coordinate [4Fe-4S] cluster: C127, C131, and C134. Residues 174–175 (GE), S204, 227–229 (SLH), and N303 contribute to the S-adenosyl-L-methionine site. C346 functions as the S-methylcysteine intermediate in the catalytic mechanism.

It belongs to the radical SAM superfamily. RlmN family. [4Fe-4S] cluster serves as cofactor.

It localises to the cytoplasm. The enzyme catalyses adenosine(2503) in 23S rRNA + 2 reduced [2Fe-2S]-[ferredoxin] + 2 S-adenosyl-L-methionine = 2-methyladenosine(2503) in 23S rRNA + 5'-deoxyadenosine + L-methionine + 2 oxidized [2Fe-2S]-[ferredoxin] + S-adenosyl-L-homocysteine. The catalysed reaction is adenosine(37) in tRNA + 2 reduced [2Fe-2S]-[ferredoxin] + 2 S-adenosyl-L-methionine = 2-methyladenosine(37) in tRNA + 5'-deoxyadenosine + L-methionine + 2 oxidized [2Fe-2S]-[ferredoxin] + S-adenosyl-L-homocysteine. Specifically methylates position 2 of adenine 2503 in 23S rRNA and position 2 of adenine 37 in tRNAs. In Nostoc sp. (strain PCC 7120 / SAG 25.82 / UTEX 2576), this protein is Probable dual-specificity RNA methyltransferase RlmN.